The chain runs to 262 residues: Phosphatidylglycerol--prolipoprotein diacylglyceryl transferase (262 aa).

4 helical membrane-spanning segments follow: residues 17–37 (FAIH…LLLG), 59–79 (LLFA…TLFY), 94–114 (IWEG…ALYW), and 121–141 (TTFF…LAFG). R142 contacts a 1,2-diacyl-sn-glycero-3-phospho-(1'-sn-glycerol). Transmembrane regions (helical) follow at residues 176–196 (QIYQ…FYAG), 201–221 (VGQV…LAEY), and 231–251 (LLGL…FFGI).

Belongs to the Lgt family.

It is found in the cell inner membrane. It catalyses the reaction L-cysteinyl-[prolipoprotein] + a 1,2-diacyl-sn-glycero-3-phospho-(1'-sn-glycerol) = an S-1,2-diacyl-sn-glyceryl-L-cysteinyl-[prolipoprotein] + sn-glycerol 1-phosphate + H(+). It functions in the pathway protein modification; lipoprotein biosynthesis (diacylglyceryl transfer). Catalyzes the transfer of the diacylglyceryl group from phosphatidylglycerol to the sulfhydryl group of the N-terminal cysteine of a prolipoprotein, the first step in the formation of mature lipoproteins. The sequence is that of Phosphatidylglycerol--prolipoprotein diacylglyceryl transferase from Polynucleobacter necessarius subsp. necessarius (strain STIR1).